The chain runs to 239 residues: MKFTGPLVPATLVQRYKRFLFDAILTDGTAITGSCPNTGSMRGLTTPGSRIWLSEHDSTTRKYRHMLEIVEADGTLVGINTGLPNRIAEEAISAGQVSNLDSYDTLRREQRYGRNSRIDILLSDAEKGLAYVEVKNVHFSRLSGLAEFPDSPTERGAKHLEELGDMVAAGHRAIMLYLVQRDDCSRFRICRELDPVYARAFERASTRGVEAYAVKCQVSPLQIVATGPMMVDEAVPAVL.

It belongs to the SfsA family.

The sequence is that of Sugar fermentation stimulation protein homolog from Sinorhizobium medicae (strain WSM419) (Ensifer medicae).